We begin with the raw amino-acid sequence, 97 residues long: MNKSMLIFFTILFLTYIIEEKEALKVEDLPEPESYKRAKQLALKDAKGDKNAETIALNFLKQNRRDCMKNCKLVPTCALLSPECCPDKTDVCKKLAL.

The first 23 residues, 1 to 23, serve as a signal peptide directing secretion; that stretch reads MNKSMLIFFTILFLTYIIEEKEA.

Belongs to the scoloptoxin-10 family. Post-translationally, contains 3 disulfide bonds. Expressed by the venom gland.

The protein resides in the secreted. The polypeptide is U-scoloptoxin(10)-Sa2a (Scolopendra alternans (Florida Keys giant centipede)).